The following is a 95-amino-acid chain: UPF0213 protein YPK_3712 (95 aa).

The region spanning 4-79 (SLWHLYLLRT…KQLSKQQKEK (76 aa)) is the GIY-YIG domain.

Belongs to the UPF0213 family.

In Yersinia pseudotuberculosis serotype O:3 (strain YPIII), this protein is UPF0213 protein YPK_3712.